Consider the following 662-residue polypeptide: MNFPWDQLLVKGNWMITMAQIGAPFLVIGLIAVITYFKLWKYLYKEWFTSVDHKKIGVMYLICAVLMFVRGGIDALLIRAQLTVPDNKFLESNHYNEIFSTHGVIMIIFMAMPFIFGLWNIVVPLQIGARDVAFPVLNNVSFWLFFAGMILFNLSFIIGGSPAAGWTNYAPLAGEFSPGPGVNYYLIAIQISGLGTLATGINFFVTILRCKTPTMKFMQMPMFTVTTFITTLIVILAFPPLTVALALMTTDRIFDTAFFTVAHGGMPMLWANFFWVWGHPEVYIVILPAFGIYSEIIPTFARKRLFGHQSMVWATAGIAFLSFLVWVHHFFTMGNGALINSFFSISTMLIGIPTGVKLFNWLLTLYKGRITFESPMLFSLAFIPNFLLGGVTGVMLAMASADYQYHNTYFLVAHFHYTLVTGVVFACLAGLIFWYPKMMGYKLNETLNKWCFWFFMIGFNVCFLPQFILGLDGMPRRLYTYMPSDGWFLLNLISTIGALLMAIGFLFLVVSIVYSHFKSPREATGDNWDGLGRTLEWTTASAIPPKYNFAITPDWNDYDTFVDMKEHGRHYLDNHNYKDIHMPNNTPVGFWIGIFMTIGGFFLIFETVIPALICLFGIFGTMIYRSFQIDHGYHIPAAEVAETEARLREARIKEREAVSHES.

The next 2 helical transmembrane spans lie at 14-34 (WMIT…IAVI) and 58-78 (VMYL…ALLI). A Fe(II)-heme a-binding site is contributed by H102. 8 helical membrane passes run 103–123 (GVIM…NIVV), 140–160 (VSFW…IIGG), 187–207 (IAIQ…FVTI), 228–248 (FITT…LALM), 273–293 (FFWV…FGIY), 311–331 (MVWA…HHFF), 336–356 (GALI…PTGV), and 376–396 (MLFS…GVML). 4 residues coordinate Cu cation: H279, Y283, H328, and H329. The segment at residues 279–283 (HPEVY) is a cross-link (1'-histidyl-3'-tyrosine (His-Tyr)). H414 contacts heme a3. 5 helical membrane passes run 415 to 435 (FHYT…IFWY), 451 to 471 (CFWF…ILGL), 493 to 513 (ISTI…VSIV), 587 to 604 (PVGF…FFLI), and 608 to 627 (VIPA…YRSF). Residue H416 coordinates Fe(II)-heme a.

This sequence belongs to the heme-copper respiratory oxidase family. The cofactor is Cu cation. Ferriheme a serves as cofactor. Requires Heme A3. as cofactor.

Its subcellular location is the cell membrane. It catalyses the reaction 2 a quinol + O2 = 2 a quinone + 2 H2O. It functions in the pathway energy metabolism; oxidative phosphorylation. Functionally, catalyzes quinol oxidation with the concomitant reduction of oxygen to water. This Staphylococcus aureus (strain COL) protein is Probable quinol oxidase subunit 1 (qoxB).